Consider the following 576-residue polypeptide: D-lactate dehydrogenase [cytochrome], mitochondrial (576 aa).

In terms of domain architecture, FAD-binding PCMH-type spans 139–320 (EANQRPEIVL…TEATIKCHVR (182 aa)).

Belongs to the FAD-binding oxidoreductase/transferase type 4 family. FAD serves as cofactor. Requires Zn(2+) as cofactor.

Its subcellular location is the mitochondrion matrix. It carries out the reaction (R)-lactate + 2 Fe(III)-[cytochrome c] = 2 Fe(II)-[cytochrome c] + pyruvate + 2 H(+). Its function is as follows. Catalyzes the stereospecific oxidation of D-lactate to pyruvate. The protein is D-lactate dehydrogenase [cytochrome], mitochondrial (DLD1) of Kluyveromyces lactis (strain ATCC 8585 / CBS 2359 / DSM 70799 / NBRC 1267 / NRRL Y-1140 / WM37) (Yeast).